Here is a 277-residue protein sequence, read N- to C-terminus: Urease accessory protein UreD (277 aa).

This sequence belongs to the UreD family. As to quaternary structure, ureD, UreF and UreG form a complex that acts as a GTP-hydrolysis-dependent molecular chaperone, activating the urease apoprotein by helping to assemble the nickel containing metallocenter of UreC. The UreE protein probably delivers the nickel.

The protein localises to the cytoplasm. Its function is as follows. Required for maturation of urease via the functional incorporation of the urease nickel metallocenter. This chain is Urease accessory protein UreD, found in Pseudomonas entomophila (strain L48).